Here is a 312-residue protein sequence, read N- to C-terminus: Glyoxylate/hydroxypyruvate reductase A (312 aa).

Arg-227 is a catalytic residue. Residue His-275 is the Proton donor of the active site.

Belongs to the D-isomer specific 2-hydroxyacid dehydrogenase family. GhrA subfamily.

It localises to the cytoplasm. The enzyme catalyses glycolate + NADP(+) = glyoxylate + NADPH + H(+). The catalysed reaction is (R)-glycerate + NAD(+) = 3-hydroxypyruvate + NADH + H(+). It catalyses the reaction (R)-glycerate + NADP(+) = 3-hydroxypyruvate + NADPH + H(+). Catalyzes the NADPH-dependent reduction of glyoxylate and hydroxypyruvate into glycolate and glycerate, respectively. This chain is Glyoxylate/hydroxypyruvate reductase A, found in Escherichia coli O6:K15:H31 (strain 536 / UPEC).